The chain runs to 457 residues: Phosphatidate cytidylyltransferase (457 aa).

Transmembrane regions (helical) follow at residues 71 to 91 (VMISGFFITLASGHAWCIVLI), 154 to 174 (FIVTNHKFICYCLYLMGFVLF), 188 to 208 (GSLCVTHMVLLLVVFQAHLII), 214 to 234 (GLFWFLLPCGLVIVNDIFAYL), 255 to 275 (GFLGAWFFTALASIILTRILS), and 330 to 350 (FHALNLATFASLFAPFGGFFA).

This sequence belongs to the CDS family. As to quaternary structure, homodimer. It depends on Mg(2+) as a cofactor.

It localises to the endoplasmic reticulum membrane. The protein resides in the cytoplasmic vesicle. Its subcellular location is the secretory vesicle. It carries out the reaction a 1,2-diacyl-sn-glycero-3-phosphate + CTP + H(+) = a CDP-1,2-diacyl-sn-glycerol + diphosphate. It participates in phospholipid metabolism; CDP-diacylglycerol biosynthesis; CDP-diacylglycerol from sn-glycerol 3-phosphate: step 3/3. Its function is as follows. Supplies CDP-diacylglycerol, which may play an important role as both a precursor to phosphoinositide biosynthesis in the plasma membrane and as a negative effector of phosphatidylinositol 4-kinase activity, thereby exerting an effect on cell proliferation via a lipid-dependent signal transduction cascade. The chain is Phosphatidate cytidylyltransferase (CDS1) from Saccharomyces cerevisiae (strain ATCC 204508 / S288c) (Baker's yeast).